The primary structure comprises 308 residues: 50 kDa gamma-zein (308 aa).

The first 19 residues, 1–19 (MKLVLVVLAFIALVSSVSC), serve as a signal peptide directing secretion. The segment at 27–159 (CGQQQSHEQQ…QPQQPQQYQQ (133 aa)) is disordered. Low complexity predominate over residues 55-119 (HHQQQQHQQQ…QHHQQSQGHV (65 aa)). The span at 120-129 (QQHEQSHEQH) shows a compositional bias: basic and acidic residues. Residues 130 to 159 (QGQSHEQQHQQQFQGHDKQQQPQQPQQYQQ) show a composition bias toward low complexity. A lipid anchor (GPI-anchor amidated cysteine) is attached at Cys-286. Positions 287 to 308 (GLYHSYYQNNPCSSNDISGVCN) are cleaved as a propeptide — removed in mature form.

The protein belongs to the gliadin/glutenin family. Interacts with OP10 (via N-terminus).

Its subcellular location is the cell membrane. Its function is as follows. Zeins are major seed storage proteins. The protein is 50 kDa gamma-zein of Zea mays (Maize).